Reading from the N-terminus, the 67-residue chain is Histone H2A (67 aa).

Gln60 is modified (N5-methylglutamine).

This sequence belongs to the histone H2A family. As to quaternary structure, the nucleosome is a histone octamer containing two molecules each of H2A, H2B, H3 and H4 assembled in one H3-H4 heterotetramer and two H2A-H2B heterodimers. The octamer wraps approximately 147 bp of DNA.

The protein localises to the nucleus. The protein resides in the chromosome. In terms of biological role, core component of nucleosome. Nucleosomes wrap and compact DNA into chromatin, limiting DNA accessibility to the cellular machineries which require DNA as a template. Histones thereby play a central role in transcription regulation, DNA repair, DNA replication and chromosomal stability. DNA accessibility is regulated via a complex set of post-translational modifications of histones, also called histone code, and nucleosome remodeling. This is Histone H2A from Olisthodiscus luteus (Marine phytoflagellate).